We begin with the raw amino-acid sequence, 330 residues long: Homeobox protein Hox-C13 (330 aa).

The span at 30-47 (GGGGGGGGGTGGAGGGCS) shows a compositional bias: gly residues. The disordered stretch occupies residues 30 to 50 (GGGGGGGGGTGGAGGGCSGAS). The segment at residues 260–319 (GRKKRVPYTKVQLKELEKEYAASKFITKEKRRRISATTNLSERQVTIWFQNRRVKEKKVV) is a DNA-binding region (homeobox).

It belongs to the Abd-B homeobox family.

The protein resides in the nucleus. Transcription factor which plays a role in hair follicle differentiation. Regulates FOXQ1 expression and that of other hair-specific genes. This chain is Homeobox protein Hox-C13 (HOXC13), found in Homo sapiens (Human).